The following is a 501-amino-acid chain: Phase 2 flagellin (501 aa).

The protein belongs to the bacterial flagellin family.

It is found in the secreted. The protein resides in the bacterial flagellum. Flagellin is the subunit protein which polymerizes to form the filaments of bacterial flagella. The polypeptide is Phase 2 flagellin (fljB) (Salmonella abortus-equi).